Here is a 3583-residue protein sequence, read N- to C-terminus: Surfactin synthase subunit 2 (3583 aa).

3 Carrier domains span residues 965–1039 (APKT…EENE), 2005–2080 (APET…EASA), and 3034–3108 (APTT…ERAE). Residues Ser-999, Ser-2040, and Ser-3069 each carry the O-(pantetheine 4'-phosphoryl)serine modification.

The protein belongs to the ATP-dependent AMP-binding enzyme family. The cofactor is pantetheine 4'-phosphate.

Its pathway is antibiotic biosynthesis; surfactin biosynthesis. Functionally, this protein is a multifunctional enzyme able to activate and polymerize the amino acids Leu, Glu, Asp and Val. Activation sites for these AA consist of individual domains. The polypeptide is Surfactin synthase subunit 2 (srfAB) (Bacillus subtilis (strain 168)).